The following is a 246-amino-acid chain: Osmotin-like protein OSML13 (246 aa).

A signal peptide spans 1-21 (MAYLRSSFVFFLLAFVTYTYA). Cystine bridges form between Cys30-Cys225, Cys72-Cys82, Cys87-Cys93, Cys141-Cys213, Cys146-Cys196, Cys154-Cys164, Cys168-Cys177, and Cys178-Cys183.

It belongs to the thaumatin family.

The sequence is that of Osmotin-like protein OSML13 from Solanum commersonii (Commerson's wild potato).